The chain runs to 261 residues: Phosphatidylglycerol--prolipoprotein diacylglyceryl transferase (261 aa).

The next 4 membrane-spanning stretches (helical) occupy residues 12-32 (ISIRWYAICIVTGLVLAVYLA), 41-61 (IIPDDILDFILVAFPVAIVGA), 87-107 (GIAGIAIYGGLIAGAIVLYFF), and 112-132 (LIHPVDFLDIAAPSVMIAQSI). Arginine 134 provides a ligand contact to a 1,2-diacyl-sn-glycero-3-phospho-(1'-sn-glycerol). Helical transmembrane passes span 170 to 190 (QPTFLYESVWNLIGFILIIVL), 200 to 220 (GEIAAFYLIWYGFGRMIIEGM), and 229 to 249 (GLRVSQWLSLILIFVGIGIII).

This sequence belongs to the Lgt family.

It localises to the cell membrane. The catalysed reaction is L-cysteinyl-[prolipoprotein] + a 1,2-diacyl-sn-glycero-3-phospho-(1'-sn-glycerol) = an S-1,2-diacyl-sn-glyceryl-L-cysteinyl-[prolipoprotein] + sn-glycerol 1-phosphate + H(+). It participates in protein modification; lipoprotein biosynthesis (diacylglyceryl transfer). In terms of biological role, catalyzes the transfer of the diacylglyceryl group from phosphatidylglycerol to the sulfhydryl group of the N-terminal cysteine of a prolipoprotein, the first step in the formation of mature lipoproteins. The chain is Phosphatidylglycerol--prolipoprotein diacylglyceryl transferase from Streptococcus sanguinis (strain SK36).